Consider the following 577-residue polypeptide: Arginine--tRNA ligase (577 aa).

A 'HIGH' region motif is present at residues proline 122–histidine 132.

Belongs to the class-I aminoacyl-tRNA synthetase family. Monomer.

The protein localises to the cytoplasm. The enzyme catalyses tRNA(Arg) + L-arginine + ATP = L-arginyl-tRNA(Arg) + AMP + diphosphate. The chain is Arginine--tRNA ligase from Shigella flexneri.